We begin with the raw amino-acid sequence, 231 residues long: 2-C-methyl-D-erythritol 2,4-cyclodiphosphate synthase, chloroplastic (231 aa).

The transit peptide at Met-1–Ser-52 directs the protein to the chloroplast. The a divalent metal cation site is built by Asp-82 and His-84. Substrate contacts are provided by residues Asp-82 to His-84, His-108 to Ser-109, Asp-112 to Asp-120, Asp-130 to Gly-132, Phe-135 to Asp-139, Asp-139, Leu-174 to Ser-180, and Ala-205 to Glu-209. His-116 is a binding site for a divalent metal cation.

This sequence belongs to the IspF family. In terms of assembly, homotrimer. A divalent metal cation serves as cofactor.

The protein resides in the plastid. It localises to the chloroplast stroma. The catalysed reaction is 4-CDP-2-C-methyl-D-erythritol 2-phosphate = 2-C-methyl-D-erythritol 2,4-cyclic diphosphate + CMP. It functions in the pathway isoprenoid biosynthesis; isopentenyl diphosphate biosynthesis via DXP pathway; isopentenyl diphosphate from 1-deoxy-D-xylulose 5-phosphate: step 4/6. In terms of biological role, enzyme of the plastid non-mevalonate pathway for isoprenoid biosynthesis that converts 4-diphosphocytidyl-2C-methyl-D-erythritol 2-phosphate into 2C-methyl-D-erythritol 2,4-cyclodiphosphate and CMP. Is essential for chloroplast development. This Arabidopsis thaliana (Mouse-ear cress) protein is 2-C-methyl-D-erythritol 2,4-cyclodiphosphate synthase, chloroplastic.